Consider the following 116-residue polypeptide: Peptidyl-tRNA hydrolase (116 aa).

Belongs to the PTH2 family.

It localises to the cytoplasm. The catalysed reaction is an N-acyl-L-alpha-aminoacyl-tRNA + H2O = an N-acyl-L-amino acid + a tRNA + H(+). The natural substrate for this enzyme may be peptidyl-tRNAs which drop off the ribosome during protein synthesis. This Methanococcus maripaludis (strain DSM 14266 / JCM 13030 / NBRC 101832 / S2 / LL) protein is Peptidyl-tRNA hydrolase (pth).